Reading from the N-terminus, the 238-residue chain is Flagellar L-ring protein (238 aa).

The N-terminal stretch at 1-23 (MIKLFICQKKYYLTAIFLLTIQS) is a signal peptide. The N-palmitoyl cysteine moiety is linked to residue Cys-24. Cys-24 is lipidated: S-diacylglycerol cysteine.

Belongs to the FlgH family. As to quaternary structure, the basal body constitutes a major portion of the flagellar organelle and consists of four rings (L,P,S, and M) mounted on a central rod.

The protein localises to the cell outer membrane. Its subcellular location is the bacterial flagellum basal body. Its function is as follows. Assembles around the rod to form the L-ring and probably protects the motor/basal body from shearing forces during rotation. This is Flagellar L-ring protein from Buchnera aphidicola subsp. Acyrthosiphon pisum (strain 5A).